Reading from the N-terminus, the 473-residue chain is Rop guanine nucleotide exchange factor 3 (473 aa).

A disordered region spans residues 1-28; that stretch reads MENLSNPDENDDHQSPRSIDQNDQSAVE. Over residues 16–28 the composition is skewed to polar residues; the sequence is PRSIDQNDQSAVE. Residues 95–473 enclose the PRONE domain; it reads LVVQEISEPE…YVDKTMRGSE (379 aa).

Functionally, guanine-nucleotide exchange factor (GEF) that acts as an activator of Rop (Rho of plants) GTPases by promoting the exchange of GDP for GTP. The chain is Rop guanine nucleotide exchange factor 3 (ROPGEF3) from Arabidopsis thaliana (Mouse-ear cress).